The chain runs to 130 residues: Small ribosomal subunit protein uS9 (130 aa).

It belongs to the universal ribosomal protein uS9 family.

In Aliivibrio salmonicida (strain LFI1238) (Vibrio salmonicida (strain LFI1238)), this protein is Small ribosomal subunit protein uS9.